Here is a 32-residue protein sequence, read N- to C-terminus: Cytochrome b6-f complex subunit 8 (32 aa).

The helical transmembrane segment at 6 to 26 threads the bilayer; the sequence is IVGITWAALMVVFTFSLSLVV.

This sequence belongs to the PetN family. In terms of assembly, the 4 large subunits of the cytochrome b6-f complex are cytochrome b6, subunit IV (17 kDa polypeptide, PetD), cytochrome f and the Rieske protein, while the 4 small subunits are PetG, PetL, PetM and PetN. The complex functions as a dimer.

It localises to the plastid. Its subcellular location is the chloroplast thylakoid membrane. Functionally, component of the cytochrome b6-f complex, which mediates electron transfer between photosystem II (PSII) and photosystem I (PSI), cyclic electron flow around PSI, and state transitions. This chain is Cytochrome b6-f complex subunit 8, found in Pinus koraiensis (Korean pine).